The primary structure comprises 265 residues: Undecaprenyl-diphosphatase (265 aa).

8 helical membrane-spanning segments follow: residues 7 to 27 (IIVSIIIGVIEGITEFLPISS), 45 to 65 (TKILEIFIEFGSALSILYFFH), 86 to 106 (LHIILAILPTIFFGLLFYKKI), 108 to 128 (LLFNTYNVMYALILGGIFLLI), 145 to 165 (ISLLQSAIIGFFQIFCLYPGF), 186 to 206 (IEFSFIISIPLIMGASFYDFI), 214 to 234 (ILDLPIFFIGFMISFIVSILC), and 245 to 265 (TSLIFFGIYRFIISGLIYFIN).

It belongs to the UppP family.

The protein resides in the cell membrane. It carries out the reaction di-trans,octa-cis-undecaprenyl diphosphate + H2O = di-trans,octa-cis-undecaprenyl phosphate + phosphate + H(+). In terms of biological role, catalyzes the dephosphorylation of undecaprenyl diphosphate (UPP). Confers resistance to bacitracin. This chain is Undecaprenyl-diphosphatase, found in Buchnera aphidicola subsp. Acyrthosiphon pisum (strain Tuc7).